The primary structure comprises 960 residues: FYVE, RhoGEF and PH domain-containing protein 1 (960 aa).

2 disordered regions span residues 1–210 and 226–355; these read MHGH…SSAA and ASDR…REIP. At S48 the chain carries Phosphoserine. Residues 125–135 are compositionally biased toward basic and acidic residues; sequence PHPEGPQRLRS. 3 stretches are compositionally biased toward pro residues: residues 137–149, 156–165, and 173–190; these read PGPP…PRPS, GPKPQVPPKP, and VLPP…PLPA. Residues 171-187 carry the SH3-binding motif; sequence PRVLPPPEPIPPPPSRP. S205 is modified (phosphoserine). Residues 231–251 are compositionally biased toward pro residues; it reads APGPCPVPPEPAMLPQPPPQP. The segment covering 273–284 has biased composition (basic and acidic residues); the sequence is RDGEKVPNRDSG. The span at 285-294 shows a compositional bias: low complexity; it reads IDSISSPSNS. Acidic residues predominate over residues 335 to 350; the sequence is VDSDLEEEEEEEEEEK. The 189-residue stretch at 372–560 folds into the DH domain; sequence KVFHIANELL…ATAAEHSNAA (189 aa). The PH 1 domain maps to 589-688; that stretch reads ELIKEGHILK…WVQAINSTLL (100 aa). Residues 701–725 form a disordered region; sequence NSTNRDDEDTPPNSPNVDLGKRAPT. T710 is subject to Phosphothreonine. At S714 the chain carries Phosphoserine. An FYVE-type zinc finger spans residues 729 to 789; sequence EKEVTMCMRC…VCTDCYVALH (61 aa). Zn(2+) contacts are provided by C735, C738, C752, C755, C760, C763, C781, and C784. Positions 820–920 constitute a PH 2 domain; it reads NSVICSFLHY…WMAVLGRAGR (101 aa). Residues 922–960 form a disordered region; sequence DTFCPGPTLSEDKEMEETPVAASGATAEPPEASQTRDKT.

As to quaternary structure, interacts with DBNL/ABP1 and CTTN. Binds CDC42. May interact with CCPG1.

The protein localises to the cytoplasm. It localises to the cell projection. The protein resides in the lamellipodium. Its subcellular location is the ruffle. It is found in the cytoskeleton. Its function is as follows. Activates CDC42, a member of the Ras-like family of Rho- and Rac proteins, by exchanging bound GDP for free GTP. Plays a role in regulating the actin cytoskeleton and cell shape. The protein is FYVE, RhoGEF and PH domain-containing protein 1 (Fgd1) of Mus musculus (Mouse).